The chain runs to 314 residues: Phosphoribosylaminoimidazole-succinocarboxamide synthase (314 aa).

Belongs to the SAICAR synthetase family.

The enzyme catalyses 5-amino-1-(5-phospho-D-ribosyl)imidazole-4-carboxylate + L-aspartate + ATP = (2S)-2-[5-amino-1-(5-phospho-beta-D-ribosyl)imidazole-4-carboxamido]succinate + ADP + phosphate + 2 H(+). It participates in purine metabolism; IMP biosynthesis via de novo pathway; 5-amino-1-(5-phospho-D-ribosyl)imidazole-4-carboxamide from 5-amino-1-(5-phospho-D-ribosyl)imidazole-4-carboxylate: step 1/2. In Bacteroides fragilis (strain ATCC 25285 / DSM 2151 / CCUG 4856 / JCM 11019 / LMG 10263 / NCTC 9343 / Onslow / VPI 2553 / EN-2), this protein is Phosphoribosylaminoimidazole-succinocarboxamide synthase.